The primary structure comprises 607 residues: Siderochrome iron transporter 2 (607 aa).

A disordered region spans residues 1–46; the sequence is MGLFGSFGARNKATPQVPPGAVAKAPEGTPKGPETNDQPDMDSSRL. 13 helical membrane passes run 86-106, 129-149, 152-172, 180-200, 210-230, 242-262, 297-317, 326-346, 367-387, 404-424, 432-452, 459-479, and 499-519; these read VWAT…QSGI, ILSS…LNLW, AEGF…LAAC, AGYV…DVFV, AFTF…APLA, WAYG…AVVF, IIGA…FSLA, SAAF…FAAW, LGAC…DLYF, YMTQ…GLWV, HTCL…MIHF, IGYV…LVIG, and FIGL…AAIY. N-linked (GlcNAc...) asparagine glycosylation occurs at N538. The chain crosses the membrane as a helical span at residues 573-593; it reads FGAVAATCILILGIPAIAVWK.

It belongs to the major facilitator superfamily.

Its subcellular location is the cell membrane. In terms of biological role, major facilitator transporter involved in ferrichrome (FC) uptake. This Aspergillus fumigatus (strain ATCC MYA-4609 / CBS 101355 / FGSC A1100 / Af293) (Neosartorya fumigata) protein is Siderochrome iron transporter 2.